A 305-amino-acid polypeptide reads, in one-letter code: tRNA pseudouridine synthase B (305 aa).

The active-site Nucleophile is Asp48.

The protein belongs to the pseudouridine synthase TruB family. Type 1 subfamily.

It carries out the reaction uridine(55) in tRNA = pseudouridine(55) in tRNA. Responsible for synthesis of pseudouridine from uracil-55 in the psi GC loop of transfer RNAs. This Pseudomonas syringae pv. syringae (strain B728a) protein is tRNA pseudouridine synthase B.